The following is a 238-amino-acid chain: Riboflavin synthase (238 aa).

Lumazine-binding repeat units lie at residues 1–103 and 104–205; these read MFTG…FGGH and YVQG…EKQI. 2,4-dihydroxypteridine-binding positions include 4–6, 54–56, and 68–73; these read GIV, CLT, and GISPET. Residue serine 95 is modified to Phosphoserine. 2,4-dihydroxypteridine contacts are provided by residues 107 to 109, lysine 143, 152 to 154, and 170 to 175; these read GHV, SLT, and SMIKHT.

As to quaternary structure, homotrimer.

The catalysed reaction is 2 6,7-dimethyl-8-(1-D-ribityl)lumazine + H(+) = 5-amino-6-(D-ribitylamino)uracil + riboflavin. The protein operates within cofactor biosynthesis; riboflavin biosynthesis; riboflavin from 2-hydroxy-3-oxobutyl phosphate and 5-amino-6-(D-ribitylamino)uracil: step 2/2. In terms of biological role, catalyzes the dismutation of two molecules of 6,7-dimethyl-8-ribityllumazine, resulting in the formation of riboflavin and 5-amino-6-(D-ribitylamino)uracil. In Saccharomyces cerevisiae (strain ATCC 204508 / S288c) (Baker's yeast), this protein is Riboflavin synthase.